The chain runs to 425 residues: Serine--tRNA ligase (425 aa).

228–230 contacts L-serine; sequence TAE. Residue 259–261 participates in ATP binding; that stretch reads RSE. Position 282 (Glu282) interacts with L-serine. 346–349 serves as a coordination point for ATP; it reads EIAS. Ser382 is an L-serine binding site.

The protein belongs to the class-II aminoacyl-tRNA synthetase family. Type-1 seryl-tRNA synthetase subfamily. Homodimer. The tRNA molecule binds across the dimer.

The protein resides in the cytoplasm. It catalyses the reaction tRNA(Ser) + L-serine + ATP = L-seryl-tRNA(Ser) + AMP + diphosphate + H(+). The catalysed reaction is tRNA(Sec) + L-serine + ATP = L-seryl-tRNA(Sec) + AMP + diphosphate + H(+). It functions in the pathway aminoacyl-tRNA biosynthesis; selenocysteinyl-tRNA(Sec) biosynthesis; L-seryl-tRNA(Sec) from L-serine and tRNA(Sec): step 1/1. Its function is as follows. Catalyzes the attachment of serine to tRNA(Ser). Is also able to aminoacylate tRNA(Sec) with serine, to form the misacylated tRNA L-seryl-tRNA(Sec), which will be further converted into selenocysteinyl-tRNA(Sec). In Rickettsia africae (strain ESF-5), this protein is Serine--tRNA ligase.